The following is a 156-amino-acid chain: ATP synthase subunit b (156 aa).

The helical transmembrane segment at 13 to 33 (AFIIFVWCCMKFVWPPLMAAI) threads the bilayer.

Belongs to the ATPase B chain family. F-type ATPases have 2 components, F(1) - the catalytic core - and F(0) - the membrane proton channel. F(1) has five subunits: alpha(3), beta(3), gamma(1), delta(1), epsilon(1). F(0) has three main subunits: a(1), b(2) and c(10-14). The alpha and beta chains form an alternating ring which encloses part of the gamma chain. F(1) is attached to F(0) by a central stalk formed by the gamma and epsilon chains, while a peripheral stalk is formed by the delta and b chains.

The protein localises to the cell inner membrane. F(1)F(0) ATP synthase produces ATP from ADP in the presence of a proton or sodium gradient. F-type ATPases consist of two structural domains, F(1) containing the extramembraneous catalytic core and F(0) containing the membrane proton channel, linked together by a central stalk and a peripheral stalk. During catalysis, ATP synthesis in the catalytic domain of F(1) is coupled via a rotary mechanism of the central stalk subunits to proton translocation. Its function is as follows. Component of the F(0) channel, it forms part of the peripheral stalk, linking F(1) to F(0). In Aeromonas salmonicida (strain A449), this protein is ATP synthase subunit b.